The sequence spans 317 residues: Heme-binding protein HMX1 (317 aa).

Topologically, residues 1-289 (MEDSSNTIIP…FNKDSATRRA (289 aa)) are cytoplasmic. Residues 290-310 (LHTVMLLVLSIIAIWVLYFLV) traverse the membrane as a helical; Anchor for type IV membrane protein segment.

The cofactor is heme.

The protein localises to the endoplasmic reticulum membrane. In terms of biological role, plays an important role in the degradation of heme under conditions of iron deprivation. This chain is Heme-binding protein HMX1 (HMX1), found in Saccharomyces cerevisiae (strain ATCC 204508 / S288c) (Baker's yeast).